Here is an 828-residue protein sequence, read N- to C-terminus: Potassium channel SKOR (828 aa).

Over 1-86 the chain is Cytoplasmic; that stretch reads MGGSSGGGVS…PDNRWYKAWT (86 aa). The helical transmembrane segment at 87 to 107 threads the bilayer; that stretch reads MFILIWALYSSFFTPLEFGFF. Residues 108–114 lie on the Extracellular side of the membrane; the sequence is RGLPENL. The chain crosses the membrane as a helical span at residues 115 to 135; sequence FILDIAGQIAFLVDIVLTFFV. Over 136–158 the chain is Cytoplasmic; sequence AYRDSRTYRMIYKRSSIALRYLK. The chain crosses the membrane as a helical span at residues 159-179; that stretch reads STFIIDLLACMPWDIIYKAAG. The Extracellular segment spans residues 180 to 185; it reads EKEEVR. Residues 186-206 form a helical; Voltage-sensor membrane-spanning segment; sequence YLLLIRLYRVHRVILFFHKME. Topologically, residues 207–220 are cytoplasmic; it reads KDIRINYLFTRIVK. Residues 221 to 241 form a helical membrane-spanning segment; it reads LIFVELYCTHTAACIFYYLAT. The Extracellular segment spans residues 242-276; the sequence is TLPASQEGYTWIGSLKLGDYSYSKFREIDLWTRYT. The segment at residues 277 to 296 is an intramembrane region (pore-forming); it reads TSMYFAVVTMATVGYGDIHA. Over 297-300 the chain is Extracellular; sequence VNMR. Residues 301 to 321 traverse the membrane as a helical segment; the sequence is EMIFAMVYISFDMILGAYLIG. The Cytoplasmic portion of the chain corresponds to 322–828; sequence NMTALIVKGS…GQKLYLAVET (507 aa). An a nucleoside 3',5'-cyclic phosphate-binding site is contributed by 403–523; it reads LFRGCSSEFI…RRILNNLLEG (121 aa). 6 ANK repeats span residues 545 to 576, 580 to 609, 613 to 642, 644 to 673, 677 to 706, and 710 to 740; these read EAEL…DPNK, DGRS…DVNI, LGST…TLNI, NAGT…DPNS, DHRT…NVLA, and WGNT…QISS. The KHA domain occupies 756–828; sequence KCTVYFSHPG…GQKLYLAVET (73 aa).

Belongs to the potassium channel family. Plant (TC 1.A.1.4) subfamily. As to quaternary structure, the potassium channel is probably composed of a homo- or heterotetrameric complex of pore-forming subunits. Expressed in root pericycle and xylem parenchyma, and in flower at a lower level.

Its subcellular location is the membrane. Highly selective outward-rectifying potassium channel. Involved in potassium release into the xylem sap toward the shoots. Assuming opened or closed conformations in response to the voltage difference across the membrane, the channel is activated by depolarization. The voltage-dependence of the channel is abolished by internal or external acidification. May interact with the cytoskeleton or with regulatory proteins. The sequence is that of Potassium channel SKOR (SKOR) from Arabidopsis thaliana (Mouse-ear cress).